The primary structure comprises 424 residues: UDP-N-acetylglucosamine 1-carboxyvinyltransferase (424 aa).

22-23 is a binding site for phosphoenolpyruvate; it reads KN. UDP-N-acetyl-alpha-D-glucosamine is bound at residue arginine 96. Cysteine 120 serves as the catalytic Proton donor. Cysteine 120 is subject to 2-(S-cysteinyl)pyruvic acid O-phosphothioketal. UDP-N-acetyl-alpha-D-glucosamine-binding positions include 125 to 129, aspartate 312, and isoleucine 334; that span reads RPVDQ.

This sequence belongs to the EPSP synthase family. MurA subfamily.

Its subcellular location is the cytoplasm. The catalysed reaction is phosphoenolpyruvate + UDP-N-acetyl-alpha-D-glucosamine = UDP-N-acetyl-3-O-(1-carboxyvinyl)-alpha-D-glucosamine + phosphate. It participates in cell wall biogenesis; peptidoglycan biosynthesis. Its function is as follows. Cell wall formation. Adds enolpyruvyl to UDP-N-acetylglucosamine. The polypeptide is UDP-N-acetylglucosamine 1-carboxyvinyltransferase (Polynucleobacter asymbioticus (strain DSM 18221 / CIP 109841 / QLW-P1DMWA-1) (Polynucleobacter necessarius subsp. asymbioticus)).